The sequence spans 1482 residues: MIERGKFRSLTLINWNGFFARTFDLDELVTTLSGGNGAGKSTTMAAFVTALIPDLTLLHFRNTTEAGATSGSRDKGLHGKLKAGVCYSVLDVVNSRHQRVLVGVRLQQVAGRDRKVDIKPFAIQGLPSAILPTQLLTETLNDRQARVLSLNELKDKIDTMEGVQLKQFNSITDYHSLMFDLGVVARRLRSASDRSKYYRLIEASLYGGISSAITRSLRDYLLPENGGVRKAFQDMEAALRENRMTLEAIRVTQSDRDLFKHLISEATNYVAADYMRHANERRIHLDQALELRRELFSSRKQLAAEQYKHVHMARELSEHAGAEGDLETDYQAASDHLNLVQTALRQQEKIERYEADLEELQIRLEEQSEVVAEAAEQQEENEARAEAAELEVDELKSQLADYQQALDVQQTRAIQYQQALTALERARELCHLPDLSADSADEWLDTYQAKEQEATERLLSLEQKMSVAQTAHSQFEQAYQLVASINGPVSRAEAWDVARELLRDASQQRHLAEQVQPLRMRLSELEQRLREQQDAERLLAEFCKRQGKNYDPEDLEALNDELEARIAALSDSVSQAGEQRMTLRQELEQIQSRVKTLTSHAPAWLAAQNSLNQISEQSGETFESGQQVTEYLQQLLEREREAIVERDEVGARKRAVDEEIERLSQPGGAEDARLNALAERFGGVLLSEIYDDVSFDDAPYFSALYGPSRHAIVVPDLSRVRDLLDGLEDCPEDLYLIEGDPQSFDDSVFSVEELEKAVVVKVAERQWRYSRFPSVPLFGRAARESRIESLHAEREALSERYATLSFDVQKTQRLHQAFSRFVGQHLAVAFEADPEAEIRKLNTRRSEIERAISQHENDNQQQRVQFEQAKEGVAQLNRLLPRLSLLADDSLADRVEEIQERLAEAQDAARFLSQHGKALAKLEPVASVLQSDPEQFDQLKQDYEQARQTQRDARQQAFALSEVVQRRAHFSYSDSAQMLNGNTDLNEKLRQRLEQAEAERTRAREALRTHAAKLSQYHQVLASLKSSFDTKKELLGDLQRELQDIGVRADAGAEERARQRRDELHTRLSNNRSRRNQLEKQLTLCEAEMDNLTRSLKRLERNYHEMREQVVSAKAGWCAVMRMVKDNGVERRLHRRELAYHSGDDLRSMSDKALGALRLAVADNEHLRDVLRLSEDPKRPERKIQFFVAVYQHLRERIRQDIIRTDDPVEAIEQMEIELGRLTEELTSREQKLAISSRSVANIIRKTIQREQNRIRMLNQGLQSVSFGQVNSVRLNVNVRESHATLLEVLAEQHEQHQDLFNSNRLTFSEALAKLWQRLNPQIDMGQRTAQTIGEELLDYRNYLEMEVEVNRGSDGWLRAESGALSTGEAIGTGMSILVMVVQSWEDESSRLRGKDISPCRLLFLDEAARLDARSIATLFELCERLQMQLIIAAPENISPEKGTTYKLVRKVFQNHEHVHVVGLRGFAAPPADALPGPAEVS.

Position 34 to 41 (34 to 41) interacts with ATP; the sequence is GGNGAGKS. Coiled coils occupy residues 337–418, 444–472, 509–601, 781–805, 835–1116, and 1210–1265; these read LNLV…QYQQ, LDTY…QTAH, RHLA…TSHA, AARE…ATLS, EAEI…AKAG, and EAIE…LQSV. Residues 666–783 are flexible hinge; it reads PGGAEDARLN…SVPLFGRAAR (118 aa). Residues 1049–1077 are disordered; sequence ADAGAEERARQRRDELHTRLSNNRSRRNQ. Positions 1051–1066 are enriched in basic and acidic residues; that stretch reads AGAEERARQRRDELHT.

It belongs to the SMC family. MukB subfamily. Homodimerization via its hinge domain. Binds to DNA via its C-terminal region. Interacts, and probably forms a ternary complex, with MukE and MukF via its C-terminal region. The complex formation is stimulated by calcium or magnesium. Interacts with tubulin-related protein FtsZ.

It is found in the cytoplasm. The protein resides in the nucleoid. Functionally, plays a central role in chromosome condensation, segregation and cell cycle progression. Functions as a homodimer, which is essential for chromosome partition. Involved in negative DNA supercoiling in vivo, and by this means organize and compact chromosomes. May achieve or facilitate chromosome segregation by condensation DNA from both sides of a centrally located replisome during cell division. In Cronobacter sakazakii (strain ATCC BAA-894) (Enterobacter sakazakii), this protein is Chromosome partition protein MukB.